A 1423-amino-acid chain; its full sequence is DNA-directed RNA polymerase, mitochondrial (1423 aa).

Residues 1–73 (MLPRTASATR…RATVGFERHL (73 aa)) constitute a mitochondrion transit peptide. Positions 266 to 303 (NMPDNVDPDTFAQQQQQQQQQQQQQQEQQQQQDTSIDQ) are disordered. The segment covering 278 to 297 (QQQQQQQQQQQQQQEQQQQQ) has biased composition (low complexity). Catalysis depends on residues Asp901 and Lys970. Residues 1055–1064 (EFERSERSPH) are compositionally biased toward basic and acidic residues. Residues 1055-1087 (EFERSERSPHGDGTASGENITLAGNPRKSSAHK) are disordered. The active site involves Asp1180. The segment at 1316 to 1342 (VRRGREMDEEGEVDGSEEAVEHEDGMH) is disordered. Acidic residues predominate over residues 1322–1336 (MDEEGEVDGSEEAVE).

This sequence belongs to the phage and mitochondrial RNA polymerase family.

Its subcellular location is the mitochondrion. It catalyses the reaction RNA(n) + a ribonucleoside 5'-triphosphate = RNA(n+1) + diphosphate. DNA-dependent RNA polymerase catalyzes the transcription of DNA into RNA using the four ribonucleoside triphosphates as substrates. The protein is DNA-directed RNA polymerase, mitochondrial (cyt-5) of Neurospora crassa (strain ATCC 24698 / 74-OR23-1A / CBS 708.71 / DSM 1257 / FGSC 987).